The sequence spans 160 residues: SsrA-binding protein (160 aa).

Residues 131-160 (KKEYDKRHTERERDSDRELQRAVRTKGKED) form a disordered region.

This sequence belongs to the SmpB family.

Its subcellular location is the cytoplasm. Its function is as follows. Required for rescue of stalled ribosomes mediated by trans-translation. Binds to transfer-messenger RNA (tmRNA), required for stable association of tmRNA with ribosomes. tmRNA and SmpB together mimic tRNA shape, replacing the anticodon stem-loop with SmpB. tmRNA is encoded by the ssrA gene; the 2 termini fold to resemble tRNA(Ala) and it encodes a 'tag peptide', a short internal open reading frame. During trans-translation Ala-aminoacylated tmRNA acts like a tRNA, entering the A-site of stalled ribosomes, displacing the stalled mRNA. The ribosome then switches to translate the ORF on the tmRNA; the nascent peptide is terminated with the 'tag peptide' encoded by the tmRNA and targeted for degradation. The ribosome is freed to recommence translation, which seems to be the essential function of trans-translation. This chain is SsrA-binding protein, found in Pseudomonas fluorescens (strain ATCC BAA-477 / NRRL B-23932 / Pf-5).